Consider the following 204-residue polypeptide: MIKFVLDTSIFVNPDVRKKFGETPTEAMKTFLHYAENLFGKVEFYMPPGIYRELMHFVEEEEVSPDIELYIIKKPPNVHDIKIPAFVVYELIEDIRRRVDKGLRVAEKAVRESVIDTSNVDKIIQKLRRNYRKALREGILDSKEDFELILLAKEIDGIIVSADVGILTWAEKMGIKWVDAFKFKEVLSELVEKFKRSESEKERK.

The protein belongs to the HARP family.

The catalysed reaction is Endonucleolytic cleavage of RNA, removing 5'-extranucleotides from tRNA precursor.. RNA-free RNase P that catalyzes the removal of the 5'-leader sequence from pre-tRNA to produce the mature 5'-terminus. The chain is RNA-free ribonuclease P from Pyrococcus horikoshii (strain ATCC 700860 / DSM 12428 / JCM 9974 / NBRC 100139 / OT-3).